The sequence spans 221 residues: Lipoprotein-releasing system ATP-binding protein LolD (221 aa).

Residues 6–220 form the ABC transporter domain; the sequence is LTLKNVSKHY…YKLKHGALNM (215 aa). 42–49 contributes to the ATP binding site; the sequence is GSSGSGKS.

It belongs to the ABC transporter superfamily. Lipoprotein translocase (TC 3.A.1.125) family. As to quaternary structure, the complex is composed of two ATP-binding proteins (LolD) and two transmembrane proteins (LolC and LolE).

The protein localises to the cell inner membrane. Functionally, part of the ABC transporter complex LolCDE involved in the translocation of mature outer membrane-directed lipoproteins, from the inner membrane to the periplasmic chaperone, LolA. Responsible for the formation of the LolA-lipoprotein complex in an ATP-dependent manner. This chain is Lipoprotein-releasing system ATP-binding protein LolD, found in Rickettsia bellii (strain RML369-C).